Reading from the N-terminus, the 170-residue chain is Protein-export protein SecB (170 aa).

The protein belongs to the SecB family. As to quaternary structure, homotetramer, a dimer of dimers. One homotetramer interacts with 1 SecA dimer.

Its subcellular location is the cytoplasm. Functionally, one of the proteins required for the normal export of preproteins out of the cell cytoplasm. It is a molecular chaperone that binds to a subset of precursor proteins, maintaining them in a translocation-competent state. It also specifically binds to its receptor SecA. This Xanthomonas axonopodis pv. citri (strain 306) protein is Protein-export protein SecB.